Here is a 312-residue protein sequence, read N- to C-terminus: Beta-ketoacyl-[acyl-carrier-protein] synthase III (312 aa).

Active-site residues include C112 and H237. An ACP-binding region spans residues 238–242 (QANIR). N267 is a catalytic residue.

The protein belongs to the thiolase-like superfamily. FabH family. As to quaternary structure, homodimer.

It is found in the cytoplasm. The enzyme catalyses (2S)-2-methylbutanoyl-CoA + malonyl-[ACP] + H(+) = (4S)-4-methyl-3-oxohexanoyl-[ACP] + CO2 + CoA. The catalysed reaction is 2-methylpropanoyl-CoA + malonyl-[ACP] + H(+) = 4-methyl-3-oxopentanoyl-[ACP] + CO2 + CoA. It carries out the reaction 3-methylbutanoyl-CoA + malonyl-[ACP] + H(+) = 5-methyl-3-oxohexanoyl-[ACP] + CO2 + CoA. It catalyses the reaction malonyl-[ACP] + acetyl-CoA + H(+) = 3-oxobutanoyl-[ACP] + CO2 + CoA. It participates in lipid metabolism; fatty acid biosynthesis. Its function is as follows. Catalyzes the condensation reaction of fatty acid synthesis by the addition to an acyl acceptor of two carbons from malonyl-ACP. Catalyzes the first condensation reaction which initiates fatty acid synthesis and may therefore play a role in governing the total rate of fatty acid production. Possesses both acetoacetyl-ACP synthase and acetyl transacylase activities. Can use branched-chain acyl-CoAs, with a preference for 2-methylbutanoyl-CoA, the precursor of odd-numbered anteiso fatty acids, at 30 degrees Celsius, which is further increased at a low temperature. Shows weak activity with acetyl-CoA. The chain is Beta-ketoacyl-[acyl-carrier-protein] synthase III from Listeria monocytogenes serotype 1/2a (strain 10403S).